A 237-amino-acid chain; its full sequence is Uridylate kinase (237 aa).

9 to 12 (KLSG) provides a ligand contact to ATP. Positions 17–22 (GSQGYG) are involved in allosteric activation by GTP. Glycine 51 contributes to the UMP binding site. The ATP site is built by glycine 52 and arginine 56. UMP-binding positions include aspartate 71 and 132 to 139 (CGNPFFTT). Residues threonine 159, tyrosine 165, and aspartate 168 each coordinate ATP.

It belongs to the UMP kinase family. As to quaternary structure, homohexamer.

It localises to the cytoplasm. It catalyses the reaction UMP + ATP = UDP + ADP. It participates in pyrimidine metabolism; CTP biosynthesis via de novo pathway; UDP from UMP (UMPK route): step 1/1. With respect to regulation, allosterically activated by GTP. Inhibited by UTP. Its function is as follows. Catalyzes the reversible phosphorylation of UMP to UDP. This is Uridylate kinase from Synechococcus sp. (strain CC9605).